The following is a 103-amino-acid chain: Hexon-interlacing protein (103 aa).

Positions 25 to 45 are disordered; the sequence is RQNVTGSDLGGKPVPSDVLES. Positions 72-99 form a coiled coil; sequence LDDLKTQVAAMQNSVTAIQEELKDLKQR.

It belongs to the adenoviridae hexon-interlacing protein family. As to quaternary structure, homotrimer. Interacts with hexon protein; this interaction tethers the hexons together. Self-interacts with adjacent proteins. Interacts with kinesin light chain KLC1; this interaction leads to capsid disruption at the nuclear pore complex during virus entry into host cell.

The protein localises to the virion. It localises to the host nucleus. In terms of biological role, structural component of the virion that acts as a cement protein on the capsid exterior and forms triskelion structures consisting of three molecules that stabilize three hexon trimers at the center of each icosahedral facet and fixes the peripentonal hexons. Dispensable for assembly. During virus entry, recruits the anterograde motor kinesin-1 to the capsid docked at the nuclear pore complex thereby subjecting the docked capsid to a pulling force. The resulting tension leads to capsid disruption, dispersion of capsid fragments toward cell periphery and eventually viral DNA entry into the host nucleus. The sequence is that of Hexon-interlacing protein from Canine adenovirus serotype 1 (strain CLL) (CAdV-1).